The chain runs to 138 residues: Large ribosomal subunit protein uL16 (138 aa).

The protein belongs to the universal ribosomal protein uL16 family. As to quaternary structure, part of the 50S ribosomal subunit.

Binds 23S rRNA and is also seen to make contacts with the A and possibly P site tRNAs. The protein is Large ribosomal subunit protein uL16 of Paramagnetospirillum magneticum (strain ATCC 700264 / AMB-1) (Magnetospirillum magneticum).